Consider the following 429-residue polypeptide: Histidinol dehydrogenase (429 aa).

3 residues coordinate NAD(+): Tyr130, Gln191, and Asn214. Substrate contacts are provided by Ser237, Gln259, and His262. Zn(2+)-binding residues include Gln259 and His262. Active-site proton acceptor residues include Glu327 and His328. His328, Asp361, Glu415, and His420 together coordinate substrate. Asp361 is a binding site for Zn(2+). Residue His420 coordinates Zn(2+).

It belongs to the histidinol dehydrogenase family. It depends on Zn(2+) as a cofactor.

It catalyses the reaction L-histidinol + 2 NAD(+) + H2O = L-histidine + 2 NADH + 3 H(+). The protein operates within amino-acid biosynthesis; L-histidine biosynthesis; L-histidine from 5-phospho-alpha-D-ribose 1-diphosphate: step 9/9. Functionally, catalyzes the sequential NAD-dependent oxidations of L-histidinol to L-histidinaldehyde and then to L-histidine. This chain is Histidinol dehydrogenase, found in Neisseria gonorrhoeae (strain ATCC 700825 / FA 1090).